Consider the following 387-residue polypeptide: S-adenosylmethionine synthase (387 aa).

H15 provides a ligand contact to ATP. D17 is a binding site for Mg(2+). E43 serves as a coordination point for K(+). Residues E56 and Q99 each coordinate L-methionine. Residues Q99 to N109 form a flexible loop region. ATP-binding positions include D166 to K168, R232 to F233, D241, R247 to K248, A264, and K268. D241 is an L-methionine binding site. K272 contacts L-methionine.

The protein belongs to the AdoMet synthase family. As to quaternary structure, homotetramer; dimer of dimers. Mg(2+) is required as a cofactor. K(+) serves as cofactor.

It localises to the cytoplasm. It carries out the reaction L-methionine + ATP + H2O = S-adenosyl-L-methionine + phosphate + diphosphate. Its pathway is amino-acid biosynthesis; S-adenosyl-L-methionine biosynthesis; S-adenosyl-L-methionine from L-methionine: step 1/1. In terms of biological role, catalyzes the formation of S-adenosylmethionine (AdoMet) from methionine and ATP. The overall synthetic reaction is composed of two sequential steps, AdoMet formation and the subsequent tripolyphosphate hydrolysis which occurs prior to release of AdoMet from the enzyme. In Methylobacillus flagellatus (strain ATCC 51484 / DSM 6875 / VKM B-1610 / KT), this protein is S-adenosylmethionine synthase.